The chain runs to 323 residues: MYQDYPGSFDTSSRGSSGSPGHPEPYSAGAAQQKFRVDMPGSGSAFIPTINAITTSQDLQWMVQPTVITSMSSPYSRSHPYSHPLPPLSSVAGHTALQRPGVIKTIGTTVGRRRRDEQLSPEEEEKRRIRRERNKLAAAKCRNRRRELTEKLQAETEVLEEEKSVLQKEIAELQKEKEKLEFMLVAHSPVCKISPEERRSPPTSSLQSVRTGASGAVVVKQEPVEEEIPSSSLVLDKAQRSVIKPISIAGGYYGEEALNTPIVVTSTPAITPGSSNLVFTYPNVLDQESPLSPSESCSKAHRRSSSSGDQSSDSLNSPTLLAL.

Residues 1–27 (MYQDYPGSFDTSSRGSSGSPGHPEPYS) show a composition bias toward low complexity. Residues 1–31 (MYQDYPGSFDTSSRGSSGSPGHPEPYSAGAA) form a disordered region. The region spanning 124–187 (EEKRRIRRER…EKLEFMLVAH (64 aa)) is the bZIP domain. The interval 126–128 (KRR) is basic motif. A leucine-zipper region spans residues 129–136 (IRRERNKL). Disordered regions lie at residues 194–214 (SPEERRSPPTSSLQSVRTGAS) and 288–323 (ESPLSPSESCSKAHRRSSSSGDQSSDSLNSPTLLAL). Residues 305–317 (SSSGDQSSDSLNS) are compositionally biased toward low complexity.

It belongs to the bZIP family. Fos subfamily. In terms of assembly, heterodimer with JUN.

The protein resides in the nucleus. The chain is Fos-related antigen 2 (FOSL2) from Gallus gallus (Chicken).